Consider the following 491-residue polypeptide: Angiopoietin-related protein 1 (491 aa).

The first 23 residues, 1-23 (MKTFTWTLGVLFFLLVDTGHCRG), serve as a signal peptide directing secretion. Residues 80 to 168 (ITRMDLENLK…LNVTTEMLKM (89 aa)) adopt a coiled-coil conformation. Asparagine 160 and asparagine 188 each carry an N-linked (GlcNAc...) asparagine glycan. In terms of domain architecture, Fibrinogen C-terminal spans 271 to 491 (FINEGPFKDC…AVQMMIKPID (221 aa)). 2 disulfides stabilise this stretch: cysteine 280-cysteine 309 and cysteine 432-cysteine 445.

As to expression, highly expressed in adrenal gland, placenta, thyroid gland, heart, skeletal muscle and small intestine. Weakly expressed in testis, ovary, colon, pancreas, kidney and stomach.

It localises to the secreted. The sequence is that of Angiopoietin-related protein 1 (ANGPTL1) from Homo sapiens (Human).